The sequence spans 315 residues: Gamma-hemolysin component C (315 aa).

Positions methionine 1–alanine 29 are cleaved as a signal peptide.

Belongs to the aerolysin family. Toxicity requires sequential binding and synergistic association of a class S and a class F component which form heterooligomeric complexes. HlgC (class S) associates with HlgB (class F) thus forming an CB toxin.

Its function is as follows. Toxin that seems to act by forming pores in the membrane of the cell. Has a hemolytic and a leucotoxic activity. The protein is Gamma-hemolysin component C (hlgC) of Staphylococcus aureus (strain MRSA252).